Consider the following 361-residue polypeptide: MAAERGAGQQQSQEMMEVDRRVESEESGDEEGKKHGGGGIVANLSEQSLKDGVDRGAEDPEEEHELAVDMETINLDRDAEDVDLTHYRIGKIEGLEVLKKVKSLCLRQNLIKCIENLEELQSLRELDLYDNQIKKIENLEALTELEVLDISFNMLRNIEGIDKLTQLKKLFLVNNKINKIENISNLHQLQMLELGSNRIRAIENIDTLTNLESLFLGKNKITKLQNLDALTNLTVLSVQSNRLAKIEGLQSLVNLRELYLSNNGIEVIEGLENNNKLTMLDIASNRIKKIENISHLTELQEFWMNDNLLESWSDLDELKGARSLETVYLERNPLQKDPQYRRKVMLALPSVRQIDATYVRF.

A disordered region spans residues 1–64; sequence MAAERGAGQQ…RGAEDPEEEH (64 aa). A2 is modified (N-acetylalanine). 5 positions are modified to phosphoserine: S12, S24, S27, S45, and S48. The segment covering 17-34 has biased composition (basic and acidic residues); that stretch reads EVDRRVESEESGDEEGKK. Over residues 48–58 the composition is skewed to basic and acidic residues; it reads SLKDGVDRGAE. LRR repeat units follow at residues 78 to 99, 100 to 121, 122 to 143, 144 to 165, 166 to 187, 188 to 209, 210 to 231, 232 to 253, 254 to 275, 276 to 297, and 298 to 319; these read DAED…EVLK, KVKS…EELQ, SLRE…EALT, ELEV…DKLT, QLKK…SNLH, QLQM…DTLT, NLES…DALT, NLTV…QSLV, NLRE…ENNN, KLTM…SHLT, and ELQE…DELK. A Phosphoserine modification is found at S323. Residues 332 to 361 form the LRRCT domain; sequence NPLQKDPQYRRKVMLALPSVRQIDATYVRF.

This sequence belongs to the SDS22 family. Interacts with PPP1CA, PPP1CB and PPP1CC/PPP1G. In terms of tissue distribution, widely expressed with high level in testis. Expression increases during puberty. Expressed in spermatids and probably also in spermatozoa.

It is found in the nucleus. In terms of biological role, regulatory subunit of protein phosphatase 1. This Mus musculus (Mouse) protein is Protein phosphatase 1 regulatory subunit 7 (Ppp1r7).